The following is a 1700-amino-acid chain: A-kinase anchor protein SPHKAP (1700 aa).

3 disordered regions span residues 364 to 385, 742 to 778, and 793 to 885; these read SNLN…QDGE, IRRR…SNSH, and SKQD…NTQE. A compositionally biased stretch (low complexity) spans 768 to 778; sequence SSSSSPLSNSH. Residues 822–831 are compositionally biased toward polar residues; it reads DSSTATTSSK. The span at 839 to 855 shows a compositional bias: basic and acidic residues; the sequence is AGEDTKSPHHSENECRA. Polar residues predominate over residues 857–873; it reads SEGQRSPTVSQSRSGSQ. Positions 929–946 are PKA-RII subunit binding domain; it reads FAEELADTVVSMATEIAA. The disordered stretch occupies residues 980 to 1006; sequence KRKKESQGSGTAVRKHKPPRLSEIKRK. 8 positions are modified to phosphoserine: Ser-1025, Ser-1085, Ser-1107, Ser-1120, Ser-1121, Ser-1124, Ser-1259, and Ser-1288. Disordered regions lie at residues 1374–1414, 1481–1535, and 1585–1604; these read DSVT…PVPI, IHSD…DTSS, and GQSE…TASP. Positions 1383–1398 are enriched in polar residues; that stretch reads PVSSLSKTASLTNHSP. Over residues 1586 to 1604 the composition is skewed to polar residues; the sequence is QSESTEAPASGPPTGTASP.

It belongs to the AKAP110 family. As to quaternary structure, interacts (via the PKA-RII subunit binding domain) with the RI subunit of PKA. Interacts with SPHK1; the interaction greatly reduces SPHK1 activity. Highly expressed in heart. Both isoforms abundantly expressed in ventricle. Also expressed in spleen, ovary and brain.

The protein localises to the cytoplasm. In terms of biological role, anchoring protein that binds preferentially to the type I regulatory subunit of c-AMP-dependent protein kinase (PKA type I) and targets it to distinct subcellular compartments. May act as a converging factor linking cAMP and sphingosine signaling pathways. Plays a regulatory role in the modulation of SPHK1. The chain is A-kinase anchor protein SPHKAP (SPHKAP) from Homo sapiens (Human).